The sequence spans 458 residues: Bifunctional protein GlmU (458 aa).

Residues 1–230 (MHKRTAVVLA…EREILGINSR (230 aa)) are pyrophosphorylase. Residues 9–12 (LAAG), lysine 23, glutamine 73, and 78–79 (GT) contribute to the UDP-N-acetyl-alpha-D-glucosamine site. Aspartate 103 lines the Mg(2+) pocket. Residues glycine 140, glutamate 155, asparagine 170, and asparagine 228 each coordinate UDP-N-acetyl-alpha-D-glucosamine. Asparagine 228 is a binding site for Mg(2+). The tract at residues 231 to 251 (VQLAEAEAVLQDRLRRKWMDA) is linker. An N-acetyltransferase region spans residues 252 to 458 (GVTLIDPPSV…FLGRKHKGSQ (207 aa)). Arginine 333 and lysine 351 together coordinate UDP-N-acetyl-alpha-D-glucosamine. Residue histidine 363 is the Proton acceptor of the active site. UDP-N-acetyl-alpha-D-glucosamine is bound by residues tyrosine 366 and asparagine 377. Acetyl-CoA-binding positions include alanine 380, 386-387 (NY), serine 405, alanine 423, and arginine 440.

This sequence in the N-terminal section; belongs to the N-acetylglucosamine-1-phosphate uridyltransferase family. It in the C-terminal section; belongs to the transferase hexapeptide repeat family. As to quaternary structure, homotrimer. It depends on Mg(2+) as a cofactor.

The protein localises to the cytoplasm. The enzyme catalyses alpha-D-glucosamine 1-phosphate + acetyl-CoA = N-acetyl-alpha-D-glucosamine 1-phosphate + CoA + H(+). It catalyses the reaction N-acetyl-alpha-D-glucosamine 1-phosphate + UTP + H(+) = UDP-N-acetyl-alpha-D-glucosamine + diphosphate. Its pathway is nucleotide-sugar biosynthesis; UDP-N-acetyl-alpha-D-glucosamine biosynthesis; N-acetyl-alpha-D-glucosamine 1-phosphate from alpha-D-glucosamine 6-phosphate (route II): step 2/2. It participates in nucleotide-sugar biosynthesis; UDP-N-acetyl-alpha-D-glucosamine biosynthesis; UDP-N-acetyl-alpha-D-glucosamine from N-acetyl-alpha-D-glucosamine 1-phosphate: step 1/1. The protein operates within bacterial outer membrane biogenesis; LPS lipid A biosynthesis. Its function is as follows. Catalyzes the last two sequential reactions in the de novo biosynthetic pathway for UDP-N-acetylglucosamine (UDP-GlcNAc). The C-terminal domain catalyzes the transfer of acetyl group from acetyl coenzyme A to glucosamine-1-phosphate (GlcN-1-P) to produce N-acetylglucosamine-1-phosphate (GlcNAc-1-P), which is converted into UDP-GlcNAc by the transfer of uridine 5-monophosphate (from uridine 5-triphosphate), a reaction catalyzed by the N-terminal domain. This chain is Bifunctional protein GlmU, found in Heliobacterium modesticaldum (strain ATCC 51547 / Ice1).